Reading from the N-terminus, the 972-residue chain is Isoleucine--tRNA ligase (972 aa).

A 'HIGH' region motif is present at residues 63-73 (PYANGNIHIGH). L-isoleucyl-5'-AMP is bound at residue glutamate 603. A 'KMSKS' region motif is present at residues 644-648 (KMSKS). ATP is bound at residue lysine 647.

This sequence belongs to the class-I aminoacyl-tRNA synthetase family. IleS type 1 subfamily. In terms of assembly, monomer.

The protein localises to the cytoplasm. It catalyses the reaction tRNA(Ile) + L-isoleucine + ATP = L-isoleucyl-tRNA(Ile) + AMP + diphosphate. Its function is as follows. Catalyzes the attachment of isoleucine to tRNA(Ile). As IleRS can inadvertently accommodate and process structurally similar amino acids such as valine, to avoid such errors it has two additional distinct tRNA(Ile)-dependent editing activities. One activity is designated as 'pretransfer' editing and involves the hydrolysis of activated Val-AMP. The other activity is designated 'posttransfer' editing and involves deacylation of mischarged Val-tRNA(Ile). In Brucella abortus (strain 2308), this protein is Isoleucine--tRNA ligase.